The following is a 477-amino-acid chain: Aspartyl/glutamyl-tRNA(Asn/Gln) amidotransferase subunit B (477 aa).

It belongs to the GatB/GatE family. GatB subfamily. In terms of assembly, heterotrimer of A, B and C subunits.

It carries out the reaction L-glutamyl-tRNA(Gln) + L-glutamine + ATP + H2O = L-glutaminyl-tRNA(Gln) + L-glutamate + ADP + phosphate + H(+). It catalyses the reaction L-aspartyl-tRNA(Asn) + L-glutamine + ATP + H2O = L-asparaginyl-tRNA(Asn) + L-glutamate + ADP + phosphate + 2 H(+). Functionally, allows the formation of correctly charged Asn-tRNA(Asn) or Gln-tRNA(Gln) through the transamidation of misacylated Asp-tRNA(Asn) or Glu-tRNA(Gln) in organisms which lack either or both of asparaginyl-tRNA or glutaminyl-tRNA synthetases. The reaction takes place in the presence of glutamine and ATP through an activated phospho-Asp-tRNA(Asn) or phospho-Glu-tRNA(Gln). In Coxiella burnetii (strain CbuK_Q154) (Coxiella burnetii (strain Q154)), this protein is Aspartyl/glutamyl-tRNA(Asn/Gln) amidotransferase subunit B.